Reading from the N-terminus, the 116-residue chain is CDKN2AIP N-terminal-like protein (116 aa).

M1 carries the N-acetylmethionine modification. The region spanning 24 to 116 (AEQFRSYSES…RSELMRKHQS (93 aa)) is the XRN2-binding (XTBD) domain.

This sequence belongs to the CARF family. In terms of assembly, interacts with XRN2; the interaction is direct.

This is CDKN2AIP N-terminal-like protein (Cdkn2aipnl) from Mus musculus (Mouse).